Consider the following 495-residue polypeptide: Glutamate--tRNA ligase (495 aa).

Positions 14 to 24 match the 'HIGH' region motif; that stretch reads PSPTGYLHIGS. A 'KMSKS' region motif is present at residues 255-259; the sequence is KLSKR. K258 contacts ATP.

It belongs to the class-I aminoacyl-tRNA synthetase family. Glutamate--tRNA ligase type 1 subfamily. In terms of assembly, monomer.

It is found in the cytoplasm. The catalysed reaction is tRNA(Glu) + L-glutamate + ATP = L-glutamyl-tRNA(Glu) + AMP + diphosphate. Its function is as follows. Catalyzes the attachment of glutamate to tRNA(Glu) in a two-step reaction: glutamate is first activated by ATP to form Glu-AMP and then transferred to the acceptor end of tRNA(Glu). The polypeptide is Glutamate--tRNA ligase (Herpetosiphon aurantiacus (strain ATCC 23779 / DSM 785 / 114-95)).